A 111-amino-acid polypeptide reads, in one-letter code: Dynein light chain Tctex-type (111 aa).

Belongs to the dynein light chain Tctex-type family.

It is found in the cytoplasm. It localises to the cytoskeleton. Acts as a non-catalytic accessory component of a dynein complex. This Schizosaccharomyces pombe (strain 972 / ATCC 24843) (Fission yeast) protein is Dynein light chain Tctex-type (dlc1).